The primary structure comprises 464 residues: Glutathione reductase (464 aa).

Serine 17 and glycine 18 together coordinate FAD. Serine 17 is a glutathione binding site. Residue arginine 24 participates in glutathione binding. FAD is bound by residues glutamate 37, threonine 45, cysteine 46, and lysine 54. A disulfide bridge connects residues cysteine 46 and cysteine 51. Tyrosine 103 lines the glutathione pocket. Residue alanine 119 coordinates FAD. NADP(+) contacts are provided by alanine 186, isoleucine 189, glutamate 192, arginine 209, arginine 215, and glycine 274. Aspartate 315 contributes to the FAD binding site. Glutamate 321 is a binding site for NADP(+). Threonine 323 lines the FAD pocket. Arginine 331 contributes to the glutathione binding site. Valine 354 is a binding site for NADP(+). Histidine 453 provides a ligand contact to FAD. Residue histidine 453 is the Proton acceptor of the active site.

Belongs to the class-I pyridine nucleotide-disulfide oxidoreductase family. As to quaternary structure, homodimer. Requires FAD as cofactor.

The protein resides in the cytoplasm. Its subcellular location is the mitochondrion. The catalysed reaction is 2 glutathione + NADP(+) = glutathione disulfide + NADPH + H(+). Its function is as follows. Catalyzes the reduction of glutathione disulfide (GSSG) to reduced glutathione (GSH). Constitutes the major mechanism to maintain a high GSH:GSSG ratio in the cytosol. In Schizosaccharomyces pombe (strain 972 / ATCC 24843) (Fission yeast), this protein is Glutathione reductase (pgr1).